Here is a 319-residue protein sequence, read N- to C-terminus: ATP-dependent 6-phosphofructokinase (319 aa).

Residue glycine 11 coordinates ATP. Residue 21-25 participates in ADP binding; the sequence is RAVVR. Residues 72–73 and 102–105 contribute to the ATP site; these read RS and GDGS. Mg(2+) is bound at residue aspartate 103. 125–127 serves as a coordination point for substrate; that stretch reads TID. The Proton acceptor role is filled by aspartate 127. Arginine 154 contributes to the ADP binding site. Substrate is bound by residues arginine 162 and 169-171; that span reads MGR. Residues 185–187, arginine 211, and 213–215 each bind ADP; these read GAE and KKH. Residues glutamate 222, arginine 243, and 249-252 each bind substrate; that span reads HVQR.

Belongs to the phosphofructokinase type A (PFKA) family. ATP-dependent PFK group I subfamily. Prokaryotic clade 'B1' sub-subfamily. In terms of assembly, homotetramer. Requires Mg(2+) as cofactor.

Its subcellular location is the cytoplasm. The enzyme catalyses beta-D-fructose 6-phosphate + ATP = beta-D-fructose 1,6-bisphosphate + ADP + H(+). It participates in carbohydrate degradation; glycolysis; D-glyceraldehyde 3-phosphate and glycerone phosphate from D-glucose: step 3/4. Its activity is regulated as follows. Allosterically activated by ADP and other diphosphonucleosides, and allosterically inhibited by phosphoenolpyruvate. Functionally, catalyzes the phosphorylation of D-fructose 6-phosphate to fructose 1,6-bisphosphate by ATP, the first committing step of glycolysis. The chain is ATP-dependent 6-phosphofructokinase from Natranaerobius thermophilus (strain ATCC BAA-1301 / DSM 18059 / JW/NM-WN-LF).